Reading from the N-terminus, the 147-residue chain is UPF0306 protein YhbP (147 aa).

Belongs to the UPF0306 family.

This chain is UPF0306 protein YhbP, found in Escherichia coli O1:K1 / APEC.